Reading from the N-terminus, the 113-residue chain is Seminal vesicle secretory protein 4 (113 aa).

The signal sequence occupies residues 1–21 (MNSTSLFLFSLLLLLVTGAIG). A disordered region spans residues 31–113 (SEETVRESFS…KSRFSQDALE (83 aa)). 2 stretches are compositionally biased toward low complexity: residues 38-50 (SFSM…MSRS) and 83-98 (IISS…GESS).

This sequence belongs to the SVP2/SVP5/SVP6 family. Testis.

It localises to the secreted. It is found in the extracellular space. The protein is Seminal vesicle secretory protein 4 (Svs4) of Mus musculus (Mouse).